A 253-amino-acid chain; its full sequence is Zinc finger protein JAGGED (253 aa).

Residues 1 to 46 are disordered; it reads MRHEENYLDLNNLPDDFSKDGNKQALEEGSSSGQRKKKGSKEGKDE. The segment covering 16–26 has biased composition (basic and acidic residues); sequence DFSKDGNKQAL. The C2H2-type zinc-finger motif lies at 51 to 73; it reads YECRFCSLKFCKSQALGGHMNRH.

Interacts with GATA18/HAN. As to expression, expressed in the emerging leaf, sepal, petal, stamen and carpel primordia. Not expressed in the apical shoot meristem (SAM).

Its subcellular location is the nucleus. In terms of biological role, controls the morphogenesis of lateral organs. Functions in lateral organ shape and is sufficient to induce proliferation and growth of lateral organ tissue. Is necessary and sufficient for bract formation, but its expression is excluded from the cryptic bract, which could be a cause of bractless flowers in Arabidopsis. Participates with FIL and YAB3 in regulating valve margin development. Functions with JGL to define stamen and carpel shape. Functions with AS1 and AS2 in the sepal and petal primordia to repress boundary-specifying genes for normal development of the organs. The chain is Zinc finger protein JAGGED (JAG) from Arabidopsis thaliana (Mouse-ear cress).